A 563-amino-acid polypeptide reads, in one-letter code: Coiled-coil domain-containing protein 63 (563 aa).

Positions 1–29 (MSVLKKNRRKDSDTPQEPSEKAKEQQAEA) are disordered. The span at 10-29 (KDSDTPQEPSEKAKEQQAEA) shows a compositional bias: basic and acidic residues. 3 coiled-coil regions span residues 18–201 (PSEK…QLQH), 233–291 (AMKD…AKKH), and 341–422 (TELN…KKIN).

In terms of biological role, plays a role in spermiogenesis. Involved in the elongation of flagella and the formation of sperm heads. This chain is Coiled-coil domain-containing protein 63, found in Homo sapiens (Human).